Reading from the N-terminus, the 114-residue chain is Biofilm growth-associated repressor (114 aa).

Positions 17-111 constitute an HTH arsR-type domain; it reads DMEKRANEVA…ALYTIFCTQE (95 aa). Positions 51–74 form a DNA-binding region, H-T-H motif; that stretch reads VGELEQQIGIGQPTLSQQLGVLRE.

In terms of biological role, represses an operon that probably comprises itself, PD_1892, PD_1893, PD_1894 and blh. Binds to a palindromic AT-rich sequence spanning the -10 region of the blh promoter and blocks transcription of the operon. This chain is Biofilm growth-associated repressor (bigR), found in Xylella fastidiosa (strain Temecula1 / ATCC 700964).